Consider the following 208-residue polypeptide: Large ribosomal subunit protein bL25 (208 aa).

Belongs to the bacterial ribosomal protein bL25 family. CTC subfamily. Part of the 50S ribosomal subunit; part of the 5S rRNA/L5/L18/L25 subcomplex. Contacts the 5S rRNA. Binds to the 5S rRNA independently of L5 and L18.

Functionally, this is one of the proteins that binds to the 5S RNA in the ribosome where it forms part of the central protuberance. This is Large ribosomal subunit protein bL25 from Burkholderia thailandensis (strain ATCC 700388 / DSM 13276 / CCUG 48851 / CIP 106301 / E264).